The following is a 247-amino-acid chain: Probable transcriptional regulatory protein EUBELI_00902 (247 aa).

The protein belongs to the TACO1 family.

It is found in the cytoplasm. The chain is Probable transcriptional regulatory protein EUBELI_00902 from Lachnospira eligens (strain ATCC 27750 / DSM 3376 / VPI C15-48 / C15-B4) (Eubacterium eligens).